We begin with the raw amino-acid sequence, 281 residues long: Proteasome subunit beta (281 aa).

Positions 1–53 (MEANTRSTGRLPAAFLTPGSSSFMDFLSDQSPEMLPGNRSLPPLQGAVEAPHG) are cleaved as a propeptide — removed in mature form; by autocatalysis. Thr-54 (nucleophile) is an active-site residue.

It belongs to the peptidase T1B family. The 20S proteasome core is composed of 14 alpha and 14 beta subunits that assemble into four stacked heptameric rings, resulting in a barrel-shaped structure. The two inner rings, each composed of seven catalytic beta subunits, are sandwiched by two outer rings, each composed of seven alpha subunits. The catalytic chamber with the active sites is on the inside of the barrel. Has a gated structure, the ends of the cylinder being occluded by the N-termini of the alpha-subunits. Is capped by the proteasome-associated ATPase, ARC.

It is found in the cytoplasm. It carries out the reaction Cleavage of peptide bonds with very broad specificity.. Its pathway is protein degradation; proteasomal Pup-dependent pathway. With respect to regulation, the formation of the proteasomal ATPase ARC-20S proteasome complex, likely via the docking of the C-termini of ARC into the intersubunit pockets in the alpha-rings, may trigger opening of the gate for substrate entry. Interconversion between the open-gate and close-gate conformations leads to a dynamic regulation of the 20S proteasome proteolysis activity. Its function is as follows. Component of the proteasome core, a large protease complex with broad specificity involved in protein degradation. The polypeptide is Proteasome subunit beta (Streptomyces griseus subsp. griseus (strain JCM 4626 / CBS 651.72 / NBRC 13350 / KCC S-0626 / ISP 5235)).